The primary structure comprises 413 residues: Tyrosine--tRNA ligase (413 aa).

L-tyrosine is bound at residue Tyr-34. Positions 39–48 (PTSHSLTVGH) match the 'HIGH' region motif. L-tyrosine is bound by residues Tyr-164 and Gln-168. Residues 225-229 (KFGKS) carry the 'KMSKS' region motif. Residue Lys-228 participates in ATP binding. Residues 347–413 (ILLVDALVQT…GKKNNALIVF (67 aa)) enclose the S4 RNA-binding domain.

This sequence belongs to the class-I aminoacyl-tRNA synthetase family. TyrS type 1 subfamily. As to quaternary structure, homodimer.

The protein localises to the cytoplasm. It carries out the reaction tRNA(Tyr) + L-tyrosine + ATP = L-tyrosyl-tRNA(Tyr) + AMP + diphosphate + H(+). Functionally, catalyzes the attachment of tyrosine to tRNA(Tyr) in a two-step reaction: tyrosine is first activated by ATP to form Tyr-AMP and then transferred to the acceptor end of tRNA(Tyr). This chain is Tyrosine--tRNA ligase, found in Onion yellows phytoplasma (strain OY-M).